Reading from the N-terminus, the 161-residue chain is Phosphopantetheine adenylyltransferase (161 aa).

Residue Thr-9 participates in substrate binding. ATP contacts are provided by residues 9 to 10 (TF) and His-17. Positions 41, 73, and 87 each coordinate substrate. ATP is bound by residues 88 to 90 (GLR), Glu-98, and 123 to 129 (YQFISGT).

Belongs to the bacterial CoaD family. In terms of assembly, homohexamer. Requires Mg(2+) as cofactor.

Its subcellular location is the cytoplasm. The catalysed reaction is (R)-4'-phosphopantetheine + ATP + H(+) = 3'-dephospho-CoA + diphosphate. It functions in the pathway cofactor biosynthesis; coenzyme A biosynthesis; CoA from (R)-pantothenate: step 4/5. Its function is as follows. Reversibly transfers an adenylyl group from ATP to 4'-phosphopantetheine, yielding dephospho-CoA (dPCoA) and pyrophosphate. The polypeptide is Phosphopantetheine adenylyltransferase (Cupriavidus taiwanensis (strain DSM 17343 / BCRC 17206 / CCUG 44338 / CIP 107171 / LMG 19424 / R1) (Ralstonia taiwanensis (strain LMG 19424))).